Reading from the N-terminus, the 242-residue chain is Probable 2-phosphosulfolactate phosphatase (242 aa).

Belongs to the ComB family. It depends on Mg(2+) as a cofactor.

It catalyses the reaction (2R)-O-phospho-3-sulfolactate + H2O = (2R)-3-sulfolactate + phosphate. This Prochlorococcus marinus (strain NATL2A) protein is Probable 2-phosphosulfolactate phosphatase.